We begin with the raw amino-acid sequence, 446 residues long: Tubulin beta chain (446 aa).

8 residues coordinate GTP: Gln-11, Glu-69, Ser-138, Gly-142, Thr-143, Gly-144, Asn-204, and Asn-226. Position 69 (Glu-69) interacts with Mg(2+). The tract at residues 426–446 (QDATAEEEGEYVEDEDEMDGM) is disordered. Positions 429-446 (TAEEEGEYVEDEDEMDGM) are enriched in acidic residues.

It belongs to the tubulin family. In terms of assembly, dimer of alpha and beta chains. A typical microtubule is a hollow water-filled tube with an outer diameter of 25 nm and an inner diameter of 15 nM. Alpha-beta heterodimers associate head-to-tail to form protofilaments running lengthwise along the microtubule wall with the beta-tubulin subunit facing the microtubule plus end conferring a structural polarity. Microtubules usually have 13 protofilaments but different protofilament numbers can be found in some organisms and specialized cells. Requires Mg(2+) as cofactor.

The protein resides in the cytoplasm. It localises to the cytoskeleton. In terms of biological role, tubulin is the major constituent of microtubules, a cylinder consisting of laterally associated linear protofilaments composed of alpha- and beta-tubulin heterodimers. Microtubules grow by the addition of GTP-tubulin dimers to the microtubule end, where a stabilizing cap forms. Below the cap, tubulin dimers are in GDP-bound state, owing to GTPase activity of alpha-tubulin. In Euplotes crassus, this protein is Tubulin beta chain.